We begin with the raw amino-acid sequence, 315 residues long: 4-hydroxy-3-methylbut-2-enyl diphosphate reductase (315 aa).

A [4Fe-4S] cluster-binding site is contributed by C12. The (2E)-4-hydroxy-3-methylbut-2-enyl diphosphate site is built by H43 and H81. Residues H43 and H81 each coordinate dimethylallyl diphosphate. Isopentenyl diphosphate is bound by residues H43 and H81. [4Fe-4S] cluster is bound at residue C103. Position 131 (H131) interacts with (2E)-4-hydroxy-3-methylbut-2-enyl diphosphate. Position 131 (H131) interacts with dimethylallyl diphosphate. An isopentenyl diphosphate-binding site is contributed by H131. E133 serves as the catalytic Proton donor. T172 contacts (2E)-4-hydroxy-3-methylbut-2-enyl diphosphate. C200 contacts [4Fe-4S] cluster. (2E)-4-hydroxy-3-methylbut-2-enyl diphosphate is bound by residues S228, N230, and S273. Dimethylallyl diphosphate is bound by residues S228, N230, and S273. S228, N230, and S273 together coordinate isopentenyl diphosphate.

Belongs to the IspH family. Requires [4Fe-4S] cluster as cofactor.

It catalyses the reaction isopentenyl diphosphate + 2 oxidized [2Fe-2S]-[ferredoxin] + H2O = (2E)-4-hydroxy-3-methylbut-2-enyl diphosphate + 2 reduced [2Fe-2S]-[ferredoxin] + 2 H(+). The catalysed reaction is dimethylallyl diphosphate + 2 oxidized [2Fe-2S]-[ferredoxin] + H2O = (2E)-4-hydroxy-3-methylbut-2-enyl diphosphate + 2 reduced [2Fe-2S]-[ferredoxin] + 2 H(+). It functions in the pathway isoprenoid biosynthesis; dimethylallyl diphosphate biosynthesis; dimethylallyl diphosphate from (2E)-4-hydroxy-3-methylbutenyl diphosphate: step 1/1. It participates in isoprenoid biosynthesis; isopentenyl diphosphate biosynthesis via DXP pathway; isopentenyl diphosphate from 1-deoxy-D-xylulose 5-phosphate: step 6/6. Its function is as follows. Catalyzes the conversion of 1-hydroxy-2-methyl-2-(E)-butenyl 4-diphosphate (HMBPP) into a mixture of isopentenyl diphosphate (IPP) and dimethylallyl diphosphate (DMAPP). Acts in the terminal step of the DOXP/MEP pathway for isoprenoid precursor biosynthesis. The chain is 4-hydroxy-3-methylbut-2-enyl diphosphate reductase from Exiguobacterium sibiricum (strain DSM 17290 / CCUG 55495 / CIP 109462 / JCM 13490 / 255-15).